A 144-amino-acid polypeptide reads, in one-letter code: Universal stress protein A (144 aa).

The protein belongs to the universal stress protein A family. Homodimer.

It localises to the cytoplasm. Required for resistance to DNA-damaging agents. The chain is Universal stress protein A (uspA) from Salmonella typhimurium (strain LT2 / SGSC1412 / ATCC 700720).